The sequence spans 157 residues: Protein p17 (157 aa).

Disordered stretches follow at residues 46 to 70 (VTFG…PEGK) and 83 to 157 (TSRK…STQR). Over residues 88–100 (LTPTPSLSPLTSL) the composition is skewed to low complexity. Residues 114 to 132 (TSTPIPSAGTSSTLTQRVL) show a composition bias toward polar residues. Positions 134-157 (SLRAPSASTRRSLTASSSSPSTQR) are enriched in low complexity.

This chain is Protein p17 (p17), found in Helicoverpa armigera (Cotton bollworm).